The sequence spans 822 residues: Protein smoothened (822 aa).

A signal peptide spans 1–28 (MSSKRPCSIVGSFWMLWIWTATSMVARA). The Extracellular segment spans residues 29–212 (VILHPNETIF…EDEHSDMHSY (184 aa)). Residue Asn34 is glycosylated (N-linked (GlcNAc...) asparagine). Cystine bridges form between Cys42-Cys157, Cys48-Cys112, Cys56-Cys105, Cys96-Cys132, and Cys125-Cys147. An FZ domain is found at 43–160 (KKSTTCEVLK…EQFPKGCQNE (118 aa)). Asp73 serves as a coordination point for cholesterol. Asn167 carries N-linked (GlcNAc...) asparagine glycosylation. 3 disulfide bridges follow: Cys172–Cys192, Cys196–Cys274, and Cys293–Cys369. Residues 213–233 (IAVFGTITLLCTFFTLATFLA) traverse the membrane as a helical segment. Residues 234–241 (DWKNSNRY) are Cytoplasmic-facing. Residues 242 to 262 (PAVILFYVNACFFIGSIGWLA) traverse the membrane as a helical segment. Residues 263-293 (QFMDGARNEIVCKSDNTMRLGEPSSTETLSC) lie on the Extracellular side of the membrane. Residues 294–314 (VIIFVIVYYSLMSGVIWFVML) form a helical membrane-spanning segment. The Cytoplasmic segment spans residues 315 to 335 (TYAWHTSFKALGTTHQPLSGK). The helical transmembrane segment at 336–356 (TSYFHLVTWSIPFILTVAILA) threads the bilayer. Topologically, residues 357 to 381 (NSQVDADSVSGICFVGYRYYEYRAG) are extracellular. Cholesterol is bound at residue Tyr373. A helical membrane pass occupies residues 382–402 (FVLAPIGFVLVIGGYFLIRGV). The Cytoplasmic portion of the chain corresponds to 403–430 (MTLFSIKSNHPGLLSEKAASKINETMLR). Residues 431-451 (LGIFGFLAFGFVLITFGCHFY) traverse the membrane as a helical segment. At 452 to 503 (DFFNQAEWERSFREYVLCEANVTIAHQTNKPIPECAIKNRPSLLVGKINLFS) the chain is on the extracellular side. A disulfide bond links Cys469 and Cys486. N-linked (GlcNAc...) asparagine glycosylation occurs at Asn472. A helical transmembrane segment spans residues 504–524 (MFGTGIAMSTWVWTKATILIW). At 525–822 (KRTWFRIIGR…AELLDADSDF (298 aa)) the chain is on the cytoplasmic side. A disordered region spans residues 645–687 (MMKRKKKKKKRRKEVRPAGPAADEGNPAYHRREFGPSAVPRLP). The span at 647–658 (KRKKKKKKRRKE) shows a compositional bias: basic residues.

The protein belongs to the G-protein coupled receptor Fz/Smo family. In terms of assembly, monomer.

It localises to the cell membrane. Its subcellular location is the cell projection. It is found in the cilium. In terms of biological role, g protein-coupled receptor which associates with the patched protein (ptch) to transduce Hedgehog protein signaling. Binding of sonic hedgehog (shh) to its receptor patched prevents inhibition of smoothened (smo) by patched. When active, smo binds to and sequesters protein kinase A catalytic subunit prkaca at the cell membrane, preventing prkaca-mediated phosphorylation of gli transcription factors which releases the gli proteins from prkaca-mediated inhibition and allows for transcriptional activation of Hedgehog signaling pathway target genes. Required for the development of primary and secondary motoneurons but not for the specification of midbrain dopaminergic neurons or development of the medial floor plate. Required for induction of lateral floor plate and posterior motoneurons, anterior neural plate patterning, dorsoventral forebrain patterning, dorsoventral retinal patterning, optic stalk development, and formation of the forebrain primary axonal scaffold. Required to regulate the formation of a subset of cerebellar neurons by limiting wnt1 expression which controls cerebellar expression of transcription factor olig2. Required for development of the pancreas. Required for muscle development. Required for the formation of a single continuous intestinal lumen from multiple discontinuous lumens, probably by regulating remodeling through rab11a-mediated trafficking to facilitate lumen fusion. Required for development of the adenohypophysis. Required for anteroposterior patterning of the otic vesicle. Required for development of the anterior craniofacial skeleton. Required for patterning of the caudal fin. Required during gastrulation and early somitogenesis stages to promote cardiomyocyte formation by regulating the specification of myocardial progenitors. Required for induction of arterial endothelial cell formation by repressing venous cell fate. The chain is Protein smoothened from Danio rerio (Zebrafish).